The chain runs to 146 residues: Putative pre-16S rRNA nuclease (146 aa).

It belongs to the YqgF nuclease family.

Its subcellular location is the cytoplasm. Functionally, could be a nuclease involved in processing of the 5'-end of pre-16S rRNA. The polypeptide is Putative pre-16S rRNA nuclease (Burkholderia pseudomallei (strain 668)).